A 1166-amino-acid chain; its full sequence is Zinc finger CCHC domain-containing protein 2 (1166 aa).

Disordered regions lie at residues 1–85 (MLRM…GGHA), 205–240 (RAEG…CAKL), 550–668 (SSAD…ARFS), and 904–982 (PASF…ISAV). Residues 43 to 64 (PPPPPTGLPRGPPPPPSPPRGL) show a composition bias toward pro residues. Residues 65-76 (EPPVASGPTAGA) show a composition bias toward low complexity. Positions 214–223 (EDEPSGDGEQ) are enriched in acidic residues. Basic and acidic residues predominate over residues 572-587 (PQVEKEKVKKTEDRLN). Residues 624 to 633 (SSESYSSPSS) are compositionally biased toward low complexity. Positions 634-653 (PRHDGRESLESEEEKDRDSD) are enriched in basic and acidic residues. The span at 919–947 (LPTQNSSALNAATSAQPASTGISPSQSTV) shows a compositional bias: polar residues. The span at 949 to 963 (PAVPTHTPGPAPSPS) shows a compositional bias: pro residues. Positions 964–982 (PALTHSTAQSDSTSYISAV) are enriched in polar residues. The CCHC-type zinc-finger motif lies at 1119 to 1136 (VSCYNCGVSGHYAQDCKQ).

In Mus musculus (Mouse), this protein is Zinc finger CCHC domain-containing protein 2 (Zcchc2).